The primary structure comprises 1021 residues: Sodium/potassium-transporting ATPase subunit alpha-1 (1021 aa).

The propeptide occupies 1-5 (MGKGG). The segment covering 1 to 11 (MGKGGGRDKYE) has biased composition (basic and acidic residues). The segment at 1 to 37 (MGKGGGRDKYEPAAISEHGNKKKAKKERDMDELKKEV) is disordered. Residues 6 to 85 (GRDKYEPAAI…NALTPPPTTP (80 aa)) are Cytoplasmic-facing. N6-acetyllysine is present on Lys9. The residue at position 10 (Tyr10) is a Phosphotyrosine. The residue at position 16 (Ser16) is a Phosphoserine; by PKC. N6-acetyllysine is present on Lys21. The segment covering 26–37 (KERDMDELKKEV) has biased composition (basic and acidic residues). Phosphoserine is present on residues Ser38 and Ser45. The phosphoinositide-3 kinase binding stretch occupies residues 80-82 (PPP). A helical membrane pass occupies residues 86–106 (EWVKFCRQLFGGFSMLLWIGA). At 107 to 129 (ILCFLAYGIQAATEEEPQNDNLY) the chain is on the extracellular side. A helical membrane pass occupies residues 130–150 (LGVVLSAVVIITGCFSYYQEA). The Cytoplasmic portion of the chain corresponds to 151-286 (KSSKIMESFK…GGQTPIAAEI (136 aa)). The interval 214–233 (SSLTGESEPQTRSPDFTNEN) is disordered. Residue Ser226 is modified to Phosphoserine. Tyr258 is modified (phosphotyrosine). Residues 287–306 (EHFIHIITGVAVFLGVTFFI) form a helical membrane-spanning segment. Topologically, residues 307–318 (LSLILEYTWLEA) are extracellular. Residues 319–336 (VIFLIGIIVANVPEGLLA) form a helical membrane-spanning segment. Residues 337 to 770 (TVTVCLTLTA…EEGRLIFDNL (434 aa)) lie on the Cytoplasmic side of the membrane. Residue Asp374 is the 4-aspartylphosphate intermediate of the active site. 2 positions are modified to phosphoserine: Ser450 and Ser482. Lys485 contributes to the ATP binding site. Tyr540 carries the phosphotyrosine modification. The interval 594–715 (RAAVPDAVGK…QGAIVAVTGD (122 aa)) is mediates interaction with SCN7A. Lys659 carries the N6-succinyllysine modification. Ser666 is subject to Phosphoserine. The Mg(2+) site is built by Asp715 and Asp719. Residues 771 to 790 (KKSIAYTLTSNIPEITPFLI) form a helical membrane-spanning segment. At 791–800 (FIIANIPLPL) the chain is on the extracellular side. The helical transmembrane segment at 801-821 (GTVTILCIDLGTDMVPAISLA) threads the bilayer. The Cytoplasmic portion of the chain corresponds to 822–841 (YEQAESDIMKRQPRNPQTDK). A helical membrane pass occupies residues 842 to 864 (LVNERLISMAYGQIGMIQALGGF). At 865-916 (FTYFVILAENGFLPIHLLGLRVDWDDRWVNDVEDSYGQQWTYEQRKIVEFTC) the chain is on the extracellular side. Residues 917–936 (HTAFFVSIVVVQWADLVICK) traverse the membrane as a helical segment. The Cytoplasmic portion of the chain corresponds to 937–949 (TRRNSVFQQGMKN). At Ser941 the chain carries Phosphoserine; by PKA. The helical transmembrane segment at 950-968 (KILIFGLFEETALAAFLSY) threads the bilayer. Topologically, residues 969 to 983 (CPGMGVALRMYPLKP) are extracellular. Residues 984–1004 (TWWFCAFPYSLLIFVYDEVRK) traverse the membrane as a helical segment. At 1005–1021 (LIIRRRPGGWVEKETYY) the chain is on the cytoplasmic side.

It belongs to the cation transport ATPase (P-type) (TC 3.A.3) family. Type IIC subfamily. In terms of assembly, the sodium/potassium-transporting ATPase is composed of a catalytic alpha subunit, an auxiliary non-catalytic beta subunit and an additional regulatory subunit. Interacts with regulatory subunit FXYD1. Interacts with regulatory subunit FXYD3. Interacts with SIK1. Interacts with SLC35G1 and STIM1. Interacts with CLN3; this interaction regulates the sodium/potassium-transporting ATPase complex localization at the plasma membrane. Interacts with SCN7A; activates ATP1A1 P-type sodium:potassium-exchanging transporter activity which indirectly signals to nearby neurons to regulate sodium homeostasis. Post-translationally, phosphorylation on Tyr-10 modulates pumping activity. Phosphorylation of Ser-941 by PKA modulates the response of ATP1A1 to PKC. Dephosphorylation by protein phosphatase 2A (PP2A) following increases in intracellular sodium, leading to increase catalytic activity.

It is found in the cell membrane. It localises to the basolateral cell membrane. Its subcellular location is the sarcolemma. The protein resides in the cell projection. The protein localises to the axon. It is found in the melanosome. It carries out the reaction K(+)(out) + Na(+)(in) + ATP + H2O = K(+)(in) + Na(+)(out) + ADP + phosphate + H(+). This is the catalytic component of the active enzyme, which catalyzes the hydrolysis of ATP coupled with the exchange of sodium and potassium ions across the plasma membrane. This action creates the electrochemical gradient of sodium and potassium ions, providing the energy for active transport of various nutrients. Could also be part of an osmosensory signaling pathway that senses body-fluid sodium levels and controls salt intake behavior as well as voluntary water intake to regulate sodium homeostasis. This chain is Sodium/potassium-transporting ATPase subunit alpha-1 (ATP1A1), found in Equus caballus (Horse).